Reading from the N-terminus, the 76-residue chain is DNA-directed RNA polymerase subunit epsilon (76 aa).

This sequence belongs to the RNA polymerase subunit epsilon family. As to quaternary structure, RNAP is composed of a core of 2 alpha, a beta and a beta' subunit. The core is associated with a delta subunit, and at least one of epsilon or omega. When a sigma factor is associated with the core the holoenzyme is formed, which can initiate transcription.

The catalysed reaction is RNA(n) + a ribonucleoside 5'-triphosphate = RNA(n+1) + diphosphate. A non-essential component of RNA polymerase (RNAP). The protein is DNA-directed RNA polymerase subunit epsilon of Streptococcus equi subsp. zooepidemicus (strain H70).